The following is a 680-amino-acid chain: Multisubstrate pseudouridine synthase 7 (680 aa).

Composition is skewed to basic and acidic residues over residues 1-30 and 99-116; these read MSQE…RNGL and ILSK…KDSS. 3 disordered regions span residues 1–42, 99–136, and 206–229; these read MSQE…DLSG, ILSK…EPAT, and TKGN…RRDP. The span at 206–216 shows a compositional bias: polar residues; it reads TKGNGTFTVSK. D277 (nucleophile) is an active-site residue. Residues 358–596 form the TRUD domain; the sequence is GFINYFGLQR…PGDYRKLLVR (239 aa).

It belongs to the pseudouridine synthase TruD family.

Its subcellular location is the nucleus. The protein resides in the cytoplasm. It carries out the reaction uridine in 5S rRNA = pseudouridine in 5S rRNA. The catalysed reaction is uridine in snRNA = pseudouridine in snRNA. It catalyses the reaction uridine(13) in tRNA = pseudouridine(13) in tRNA. The enzyme catalyses a uridine in mRNA = a pseudouridine in mRNA. Catalyzes pseudouridylation at position 35 in U2 snRNA stem-loop II region which induces particular conformation of the mRNA-U2 snRNA duplex and places the nucleophile in an accessible position for the first step of splicing. Also catalyzes pseudouridylation at position 56 in U2 snRNA. Also catalyzes pseudouridylation at position 50 in 5S rRNA, position 13 in cytoplasmic tRNAs, and position 35 in pre-tRNA(Tyr). Pseudouridine residues in tRNAs may stabilize the local RNA conformation, favor interactions with protein partners and play an important role in the stabilization of the codon-anticodon interaction with mRNA. Also catalyzes pseudouridylation of mRNAs in response to heat shock: mediates pseudouridylation of mRNAs with the consensus sequence 5'-UGUAR-3'. This is Multisubstrate pseudouridine synthase 7 (pus7) from Schizosaccharomyces pombe (strain 972 / ATCC 24843) (Fission yeast).